The sequence spans 176 residues: Nucleoside triphosphate/diphosphate phosphatase (176 aa).

Catalysis depends on R23, which acts as the Proton donor. Mg(2+)-binding residues include N87, D103, D105, D107, D120, and E123.

Belongs to the Ntdp family. Requires Mg(2+) as cofactor.

The enzyme catalyses a ribonucleoside 5'-triphosphate + H2O = a ribonucleoside 5'-diphosphate + phosphate + H(+). It carries out the reaction a ribonucleoside 5'-diphosphate + H2O = a ribonucleoside 5'-phosphate + phosphate + H(+). In terms of biological role, has nucleoside phosphatase activity towards nucleoside triphosphates and nucleoside diphosphates. In Bacillus cereus (strain B4264), this protein is Nucleoside triphosphate/diphosphate phosphatase.